Here is a 455-residue protein sequence, read N- to C-terminus: 3-isopropylmalate dehydratase large subunit (455 aa).

The [4Fe-4S] cluster site is built by Cys-336, Cys-396, and Cys-399.

Belongs to the aconitase/IPM isomerase family. LeuC type 1 subfamily. As to quaternary structure, heterodimer of LeuC and LeuD. [4Fe-4S] cluster is required as a cofactor.

The catalysed reaction is (2R,3S)-3-isopropylmalate = (2S)-2-isopropylmalate. Its pathway is amino-acid biosynthesis; L-leucine biosynthesis; L-leucine from 3-methyl-2-oxobutanoate: step 2/4. Functionally, catalyzes the isomerization between 2-isopropylmalate and 3-isopropylmalate, via the formation of 2-isopropylmaleate. This is 3-isopropylmalate dehydratase large subunit from Staphylococcus aureus (strain MRSA252).